The chain runs to 463 residues: V-type proton ATPase subunit S1 (463 aa).

An N-terminal signal peptide occupies residues 1-32 (MMAATVVSRIRTGTGRAPVMWLSLSLVAVAAA). Positions 33 to 225 (VATEQQVPLV…TAVRPSRVAR (193 aa)) are excised as a propeptide. Residues 33-412 (VATEQQVPLV…EQFSYASDCA (380 aa)) are Lumenal-facing. 8 N-linked (GlcNAc...) asparagine glycosylation sites follow: asparagine 164, asparagine 255, asparagine 267, asparagine 290, asparagine 297, asparagine 344, asparagine 351, and asparagine 399. Residues cysteine 365 and cysteine 411 are joined by a disulfide bond. Residues 413 to 433 (GFFSPGIWMGLLTTLFMLFIF) form a helical membrane-spanning segment. Residues 434–463 (TYGLHMILSLKTMDRFDDHKGPTITLTQIV) are Cytoplasmic-facing.

It belongs to the vacuolar ATPase subunit S1 family. Accessory component of the multisubunit proton-transporting vacuolar (V)-ATPase protein pump. Interacts (via N-terminus) with ATP6AP2 (via N-terminus). Interacts with RNASEK. Interacts with TMEM106B (via C-terminus). In terms of processing, N-glycosylated. In terms of tissue distribution, expressed in brain cortex (at protein level). Highly expressed in islets of Langerhans. Expressed in pancreatic acini, pituitary gland, adrenal gland, lung, brain and bone marrow.

The protein resides in the endoplasmic reticulum membrane. It localises to the endoplasmic reticulum-Golgi intermediate compartment membrane. Its subcellular location is the cytoplasmic vesicle. The protein localises to the secretory vesicle. It is found in the synaptic vesicle membrane. The protein resides in the clathrin-coated vesicle membrane. Its function is as follows. Accessory subunit of the proton-transporting vacuolar (V)-ATPase protein pump, which is required for luminal acidification of secretory vesicles. Guides the V-type ATPase into specialized subcellular compartments, such as neuroendocrine regulated secretory vesicles or the ruffled border of the osteoclast, thereby regulating its activity. Involved in membrane trafficking and Ca(2+)-dependent membrane fusion. May play a role in the assembly of the V-type ATPase complex. In aerobic conditions, involved in intracellular iron homeostasis, thus triggering the activity of Fe(2+) prolyl hydroxylase (PHD) enzymes, and leading to HIF1A hydroxylation and subsequent proteasomal degradation. In islets of Langerhans cells, may regulate the acidification of dense-core secretory granules. This chain is V-type proton ATPase subunit S1 (Atp6ap1), found in Mus musculus (Mouse).